The following is a 451-amino-acid chain: tRNA-2-methylthio-N(6)-dimethylallyladenosine synthase (451 aa).

The MTTase N-terminal domain occupies 1-116 (MTYFFETYGC…LPQIFDEIKA (116 aa)). Residues cysteine 10, cysteine 46, cysteine 79, cysteine 162, cysteine 166, and cysteine 169 each coordinate [4Fe-4S] cluster. Residues 148–384 (SPKSFQSYVP…IDLQLKITAK (237 aa)) enclose the Radical SAM core domain. Positions 387-451 (KAKLGKKVDI…KGKTFRANLN (65 aa)) constitute a TRAM domain.

The protein belongs to the methylthiotransferase family. MiaB subfamily. As to quaternary structure, monomer. [4Fe-4S] cluster is required as a cofactor.

It localises to the cytoplasm. It catalyses the reaction N(6)-dimethylallyladenosine(37) in tRNA + (sulfur carrier)-SH + AH2 + 2 S-adenosyl-L-methionine = 2-methylsulfanyl-N(6)-dimethylallyladenosine(37) in tRNA + (sulfur carrier)-H + 5'-deoxyadenosine + L-methionine + A + S-adenosyl-L-homocysteine + 2 H(+). In terms of biological role, catalyzes the methylthiolation of N6-(dimethylallyl)adenosine (i(6)A), leading to the formation of 2-methylthio-N6-(dimethylallyl)adenosine (ms(2)i(6)A) at position 37 in tRNAs that read codons beginning with uridine. The protein is tRNA-2-methylthio-N(6)-dimethylallyladenosine synthase of Treponema denticola (strain ATCC 35405 / DSM 14222 / CIP 103919 / JCM 8153 / KCTC 15104).